The following is a 633-amino-acid chain: DNA-directed RNA polymerase subunit beta' (633 aa).

Zn(2+)-binding residues include Cys-72, Cys-74, Cys-87, and Cys-90. Positions 468, 470, and 472 each coordinate Mg(2+).

The protein belongs to the RNA polymerase beta' chain family. RpoC1 subfamily. In terms of assembly, in plastids the minimal PEP RNA polymerase catalytic core is composed of four subunits: alpha, beta, beta', and beta''. When a (nuclear-encoded) sigma factor is associated with the core the holoenzyme is formed, which can initiate transcription. Mg(2+) is required as a cofactor. Zn(2+) serves as cofactor.

It localises to the plastid. The protein resides in the chloroplast. The catalysed reaction is RNA(n) + a ribonucleoside 5'-triphosphate = RNA(n+1) + diphosphate. DNA-dependent RNA polymerase catalyzes the transcription of DNA into RNA using the four ribonucleoside triphosphates as substrates. This Cyanidium caldarium (Red alga) protein is DNA-directed RNA polymerase subunit beta'.